A 757-amino-acid polypeptide reads, in one-letter code: Polyribonucleotide nucleotidyltransferase (757 aa).

Mg(2+) contacts are provided by D525 and D531. One can recognise a KH domain in the interval 591–650 (PRVISVNIPVDKIGELIGPKGKTINAIQDETGADISIEEDGAVYIGAVDGPSAEAARAQV). Positions 662–734 (GESFLGTVVK…DRGKLSLAPV (73 aa)) constitute an S1 motif domain. Positions 736–757 (EEAADQEGSAAASDGPEAPAEG) are disordered.

Belongs to the polyribonucleotide nucleotidyltransferase family. The cofactor is Mg(2+).

Its subcellular location is the cytoplasm. The catalysed reaction is RNA(n+1) + phosphate = RNA(n) + a ribonucleoside 5'-diphosphate. In terms of biological role, involved in mRNA degradation. Catalyzes the phosphorolysis of single-stranded polyribonucleotides processively in the 3'- to 5'-direction. The polypeptide is Polyribonucleotide nucleotidyltransferase (Clavibacter sepedonicus (Clavibacter michiganensis subsp. sepedonicus)).